A 211-amino-acid polypeptide reads, in one-letter code: Calcipressin-like protein (211 aa).

Residues Ser-113 and Ser-117 each carry the phosphoserine modification. Phosphothreonine is present on Thr-182.

It belongs to the RCAN family.

Its function is as follows. Inhibits calcineurin-dependent transcriptional responses by binding to the catalytic domain of calcineurin. This Saccharomyces cerevisiae (strain ATCC 204508 / S288c) (Baker's yeast) protein is Calcipressin-like protein (RCN1).